Consider the following 197-residue polypeptide: Probable chemoreceptor glutamine deamidase CheD 2 (197 aa).

Belongs to the CheD family.

The enzyme catalyses L-glutaminyl-[protein] + H2O = L-glutamyl-[protein] + NH4(+). Probably deamidates glutamine residues to glutamate on methyl-accepting chemotaxis receptors (MCPs), playing an important role in chemotaxis. The protein is Probable chemoreceptor glutamine deamidase CheD 2 of Dechloromonas aromatica (strain RCB).